We begin with the raw amino-acid sequence, 98 residues long: NADH-ubiquinone oxidoreductase chain 4L (98 aa).

3 consecutive transmembrane segments (helical) span residues 1 to 21 (MSITYMNMFMAFTISLLGLLM), 29 to 49 (SLLCLEGMMLSLFVMMTMAIL), and 61 to 81 (IILLVFAACEAALGLSLLVMV).

The protein belongs to the complex I subunit 4L family. In terms of assembly, core subunit of respiratory chain NADH dehydrogenase (Complex I) which is composed of 45 different subunits.

Its subcellular location is the mitochondrion inner membrane. The enzyme catalyses a ubiquinone + NADH + 5 H(+)(in) = a ubiquinol + NAD(+) + 4 H(+)(out). Functionally, core subunit of the mitochondrial membrane respiratory chain NADH dehydrogenase (Complex I) which catalyzes electron transfer from NADH through the respiratory chain, using ubiquinone as an electron acceptor. Part of the enzyme membrane arm which is embedded in the lipid bilayer and involved in proton translocation. This Mesophylla macconnelli (MacConnell's bat) protein is NADH-ubiquinone oxidoreductase chain 4L (MT-ND4L).